Here is a 229-residue protein sequence, read N- to C-terminus: Orotidine 5'-phosphate decarboxylase (229 aa).

Residues aspartate 10, lysine 32, aspartate 59–threonine 68, threonine 119, arginine 180, glutamine 189, glycine 209, and arginine 210 contribute to the substrate site. The active-site Proton donor is lysine 61.

This sequence belongs to the OMP decarboxylase family. Type 1 subfamily. In terms of assembly, homodimer.

It catalyses the reaction orotidine 5'-phosphate + H(+) = UMP + CO2. Its pathway is pyrimidine metabolism; UMP biosynthesis via de novo pathway; UMP from orotate: step 2/2. In terms of biological role, catalyzes the decarboxylation of orotidine 5'-monophosphate (OMP) to uridine 5'-monophosphate (UMP). This is Orotidine 5'-phosphate decarboxylase from Legionella pneumophila (strain Lens).